The chain runs to 199 residues: Phosphoheptose isomerase (199 aa).

An SIS domain is found at 36–198 (MAQCLLNEHK…DRKLIPSSED (163 aa)). Position 51–53 (51–53 (NGG)) interacts with substrate. Zn(2+) contacts are provided by histidine 60 and glutamate 64. Substrate-binding positions include glutamate 64, 93-94 (ND), 119-121 (STS), serine 124, and glutamine 174. Zn(2+)-binding residues include glutamine 174 and histidine 182.

It belongs to the SIS family. GmhA subfamily. As to quaternary structure, homotetramer. The cofactor is Zn(2+).

It is found in the cytoplasm. It carries out the reaction 2 D-sedoheptulose 7-phosphate = D-glycero-alpha-D-manno-heptose 7-phosphate + D-glycero-beta-D-manno-heptose 7-phosphate. The protein operates within carbohydrate biosynthesis; D-glycero-D-manno-heptose 7-phosphate biosynthesis; D-glycero-alpha-D-manno-heptose 7-phosphate and D-glycero-beta-D-manno-heptose 7-phosphate from sedoheptulose 7-phosphate: step 1/1. Its function is as follows. Catalyzes the isomerization of sedoheptulose 7-phosphate in D-glycero-D-manno-heptose 7-phosphate. This Coxiella burnetii (strain CbuK_Q154) (Coxiella burnetii (strain Q154)) protein is Phosphoheptose isomerase.